The chain runs to 409 residues: Tryptophan synthase beta chain (409 aa).

Lys100 carries the post-translational modification N6-(pyridoxal phosphate)lysine.

The protein belongs to the TrpB family. Tetramer of two alpha and two beta chains. The cofactor is pyridoxal 5'-phosphate.

It catalyses the reaction (1S,2R)-1-C-(indol-3-yl)glycerol 3-phosphate + L-serine = D-glyceraldehyde 3-phosphate + L-tryptophan + H2O. It participates in amino-acid biosynthesis; L-tryptophan biosynthesis; L-tryptophan from chorismate: step 5/5. Its function is as follows. The beta subunit is responsible for the synthesis of L-tryptophan from indole and L-serine. The polypeptide is Tryptophan synthase beta chain (Pyrobaculum arsenaticum (strain DSM 13514 / JCM 11321 / PZ6)).